A 236-amino-acid chain; its full sequence is Orotidine 5'-phosphate decarboxylase (236 aa).

Substrate is bound by residues aspartate 17, lysine 39, 66–75 (DLKFYDIPNT), threonine 125, arginine 187, glutamine 196, glycine 216, and arginine 217. The active-site Proton donor is the lysine 68.

The protein belongs to the OMP decarboxylase family. Type 1 subfamily. In terms of assembly, homodimer.

The enzyme catalyses orotidine 5'-phosphate + H(+) = UMP + CO2. The protein operates within pyrimidine metabolism; UMP biosynthesis via de novo pathway; UMP from orotate: step 2/2. Functionally, catalyzes the decarboxylation of orotidine 5'-monophosphate (OMP) to uridine 5'-monophosphate (UMP). The sequence is that of Orotidine 5'-phosphate decarboxylase from Buchnera aphidicola subsp. Baizongia pistaciae (strain Bp).